The sequence spans 447 residues: Chromosomal replication initiator protein DnaA (447 aa).

Positions 1–74 (MPDVESFWHS…TGFKLTGAEV (74 aa)) are domain I, interacts with DnaA modulators. The domain II stretch occupies residues 74–109 (VMPHFVVADEKDAALAQELEEPAEEEVVFSEQSKKA). Residues 110–326 (MLNPKYTFDT…GALVRVQAFA (217 aa)) are domain III, AAA+ region. The ATP site is built by glycine 154, glycine 156, lysine 157, and threonine 158. The segment at 327 to 447 (TINGEDITTS…VSEIKNLLNS (121 aa)) is domain IV, binds dsDNA.

Belongs to the DnaA family. In terms of assembly, oligomerizes as a right-handed, spiral filament on DNA at oriC.

The protein resides in the cytoplasm. Functionally, plays an essential role in the initiation and regulation of chromosomal replication. ATP-DnaA binds to the origin of replication (oriC) to initiate formation of the DNA replication initiation complex once per cell cycle. Binds the DnaA box (a 9 base pair repeat at the origin) and separates the double-stranded (ds)DNA. Forms a right-handed helical filament on oriC DNA; dsDNA binds to the exterior of the filament while single-stranded (ss)DNA is stabiized in the filament's interior. The ATP-DnaA-oriC complex binds and stabilizes one strand of the AT-rich DNA unwinding element (DUE), permitting loading of DNA polymerase. After initiation quickly degrades to an ADP-DnaA complex that is not apt for DNA replication. Binds acidic phospholipids. Strand separation requires the DnaA boxes and adjacent DnaA-trio motifs as well as ATP. This Enterococcus faecalis (strain ATCC 700802 / V583) protein is Chromosomal replication initiator protein DnaA.